Reading from the N-terminus, the 165-residue chain is Neurotrophin-3 (165 aa).

Positions Ile-1–Ser-3 are cleaved as a signal peptide. Positions Thr-4 to Arg-119 are excised as a propeptide. Asn-112 carries an N-linked (GlcNAc...) asparagine glycan.

It belongs to the NGF-beta family.

The protein resides in the secreted. Functionally, seems to promote the survival of visceral and proprioceptive sensory neurons. In Anilius scytale (Coral cylinder snake), this protein is Neurotrophin-3 (NTF3).